A 127-amino-acid polypeptide reads, in one-letter code: Aspartate 1-decarboxylase (127 aa).

The Schiff-base intermediate with substrate; via pyruvic acid role is filled by serine 25. A Pyruvic acid (Ser) modification is found at serine 25. Threonine 57 contacts substrate. The active-site Proton donor is the tyrosine 58. Position 73–75 (73–75 (GAA)) interacts with substrate.

This sequence belongs to the PanD family. As to quaternary structure, heterooctamer of four alpha and four beta subunits. Pyruvate is required as a cofactor. Post-translationally, is synthesized initially as an inactive proenzyme, which is activated by self-cleavage at a specific serine bond to produce a beta-subunit with a hydroxyl group at its C-terminus and an alpha-subunit with a pyruvoyl group at its N-terminus.

It localises to the cytoplasm. The catalysed reaction is L-aspartate + H(+) = beta-alanine + CO2. The protein operates within cofactor biosynthesis; (R)-pantothenate biosynthesis; beta-alanine from L-aspartate: step 1/1. Its function is as follows. Catalyzes the pyruvoyl-dependent decarboxylation of aspartate to produce beta-alanine. This Clostridium acetobutylicum (strain ATCC 824 / DSM 792 / JCM 1419 / IAM 19013 / LMG 5710 / NBRC 13948 / NRRL B-527 / VKM B-1787 / 2291 / W) protein is Aspartate 1-decarboxylase.